The sequence spans 214 residues: Protein get-1 (214 aa).

Residues 1–4 (MPSL) lie on the Lumenal side of the membrane. Residues 5–24 (LVVIFVIELFVQLVNTIGAA) form a helical membrane-spanning segment. Residues 25–110 (TINNLLWRIA…KFDRTLTTVR (86 aa)) lie on the Cytoplasmic side of the membrane. Residues 73 to 107 (KWARLRRQHDKLLEDLEKRKKELDAAKTKFDRTLT) adopt a coiled-coil conformation. A helical transmembrane segment spans residues 111 to 131 (VVATRGLQWFLPFWYSREPMF). At 132–155 (WLPYGWFPYYVEWFASFPRAPLGS) the chain is on the lumenal side. Residues 156–172 (VSIVVWQWACTGVIKLV) traverse the membrane as a helical segment. Residues 173-214 (IETVMAVVGLIVAARQKQQEKQKAKQAVPAAGGGDSKAEEAK) lie on the Cytoplasmic side of the membrane. A disordered region spans residues 190 to 214 (QQEKQKAKQAVPAAGGGDSKAEEAK).

The protein belongs to the WRB/GET1 family. Interacts with GET3.

Its subcellular location is the endoplasmic reticulum membrane. Its function is as follows. Required for the post-translational delivery of tail-anchored (TA) proteins to the endoplasmic reticulum. Acts as a membrane receptor for soluble GET3, which recognizes and selectively binds the transmembrane domain of TA proteins in the cytosol. This is Protein get-1 (get-1) from Neurospora crassa (strain ATCC 24698 / 74-OR23-1A / CBS 708.71 / DSM 1257 / FGSC 987).